Reading from the N-terminus, the 126-residue chain is Thioredoxin-like 3-3 (126 aa).

The segment at 1 to 24 (MRKQESEGANLEFESKSNDNGNVK) is disordered. The Thioredoxin domain occupies 5 to 126 (ESEGANLEFE…RLHDRLWLHS (122 aa)). Residues C55 and C58 each act as nucleophile in the active site. A disulfide bridge connects residues C55 and C58.

Belongs to the thioredoxin family.

Functionally, probable thiol-disulfide oxidoreductase that may participate in various redox reactions. The sequence is that of Thioredoxin-like 3-3 from Arabidopsis thaliana (Mouse-ear cress).